The primary structure comprises 252 residues: Trans-aconitate 2-methyltransferase (252 aa).

It belongs to the methyltransferase superfamily. Tam family.

It localises to the cytoplasm. The catalysed reaction is trans-aconitate + S-adenosyl-L-methionine = (E)-3-(methoxycarbonyl)pent-2-enedioate + S-adenosyl-L-homocysteine. In terms of biological role, catalyzes the S-adenosylmethionine monomethyl esterification of trans-aconitate. In Escherichia coli O17:K52:H18 (strain UMN026 / ExPEC), this protein is Trans-aconitate 2-methyltransferase.